Reading from the N-terminus, the 124-residue chain is Small ribosomal subunit protein uS12 (124 aa).

The residue at position 89 (Asp-89) is a 3-methylthioaspartic acid.

The protein belongs to the universal ribosomal protein uS12 family. In terms of assembly, part of the 30S ribosomal subunit. Contacts proteins S8 and S17. May interact with IF1 in the 30S initiation complex.

Its function is as follows. With S4 and S5 plays an important role in translational accuracy. Functionally, interacts with and stabilizes bases of the 16S rRNA that are involved in tRNA selection in the A site and with the mRNA backbone. Located at the interface of the 30S and 50S subunits, it traverses the body of the 30S subunit contacting proteins on the other side and probably holding the rRNA structure together. The combined cluster of proteins S8, S12 and S17 appears to hold together the shoulder and platform of the 30S subunit. This is Small ribosomal subunit protein uS12 from Buchnera aphidicola subsp. Cinara cedri (strain Cc).